The primary structure comprises 309 residues: Calponin-2 (309 aa).

Residue Ser2 is modified to N-acetylserine. N6-acetyllysine is present on residues Lys8 and Lys25. In terms of domain architecture, Calponin-homology (CH) spans 28–132; sequence PQKEAELRSW…SLLALAGKAK (105 aa). Ser138 carries the post-translational modification Phosphoserine. Calponin-like repeat units lie at residues 166 to 191, 206 to 231, and 245 to 269; these read IGLQ…RHLY, ISLQ…RHIY, and MSLQ…RQIY. The tract at residues 273–309 is disordered; the sequence is YCPQGPAADGAPAAAGDGPGPGEPSECPPYYQEEAGY. Residues 277 to 288 are compositionally biased toward low complexity; sequence GPAADGAPAAAG.

The protein belongs to the calponin family.

Thin filament-associated protein that is implicated in the regulation and modulation of smooth muscle contraction. It is capable of binding to actin, calmodulin and tropomyosin. The interaction of calponin with actin inhibits the actomyosin Mg-ATPase activity. The polypeptide is Calponin-2 (CNN2) (Bos taurus (Bovine)).